The primary structure comprises 60 residues: Myrmicitoxin(1)-Pr4c (60 aa).

Positions 1–23 (MKAIIFLFAVLTVVAIIIPIISG) are cleaved as a signal peptide. A propeptide spanning residues 24–33 (EPNAGPHAAS) is cleaved from the precursor. At Q59 the chain carries Glutamine amide.

Belongs to the formicidae venom clade 2 family. In terms of tissue distribution, expressed by the venom gland.

The protein resides in the secreted. Its function is as follows. Toxin that causes a rapid and irreversible paralysis when intrathoracically injected into insects (blowflies). Does not cause spontaneous nocifensive behaviors by intraplantar injection in mice. The polypeptide is Myrmicitoxin(1)-Pr4c (Pogonomyrmex rugosus (Desert harvester ant)).